The following is a 98-amino-acid chain: NADH-ubiquinone oxidoreductase chain 4L (98 aa).

3 helical membrane-spanning segments follow: residues Met1 to Met21, Ala29 to Leu49, and Thr59 to Val79.

The protein belongs to the complex I subunit 4L family. As to quaternary structure, core subunit of respiratory chain NADH dehydrogenase (Complex I) which is composed of 45 different subunits.

The protein resides in the mitochondrion inner membrane. The enzyme catalyses a ubiquinone + NADH + 5 H(+)(in) = a ubiquinol + NAD(+) + 4 H(+)(out). In terms of biological role, core subunit of the mitochondrial membrane respiratory chain NADH dehydrogenase (Complex I) which catalyzes electron transfer from NADH through the respiratory chain, using ubiquinone as an electron acceptor. Part of the enzyme membrane arm which is embedded in the lipid bilayer and involved in proton translocation. This Lipotes vexillifer (Yangtze river dolphin) protein is NADH-ubiquinone oxidoreductase chain 4L (MT-ND4L).